Here is a 171-residue protein sequence, read N- to C-terminus: RxLR effector protein CRE7 (171 aa).

The first 23 residues, 1–23 (MRAIAILLAVVATIFASLHGVSA), serve as a signal peptide directing secretion. The short motif at 46 to 59 (RRLRQTGDASDEER) is the RxLR-dEER element.

It belongs to the RxLR effector family.

The protein localises to the secreted. It localises to the host cell. Functionally, effector that is involved in host plant infection. Contributes to virulence during the early infection stage, by inhibiting plant defense responses induced by both PAMP-triggered immunity (PTI) and effector-triggered immunity (ETI). This chain is RxLR effector protein CRE7, found in Phytophthora infestans (strain T30-4) (Potato late blight agent).